The sequence spans 131 residues: Small ribosomal subunit protein uS8 (131 aa).

The protein belongs to the universal ribosomal protein uS8 family. In terms of assembly, part of the 30S ribosomal subunit. Contacts proteins S5 and S12.

Its function is as follows. One of the primary rRNA binding proteins, it binds directly to 16S rRNA central domain where it helps coordinate assembly of the platform of the 30S subunit. The sequence is that of Small ribosomal subunit protein uS8 from Chlorobium phaeobacteroides (strain DSM 266 / SMG 266 / 2430).